We begin with the raw amino-acid sequence, 515 residues long: Histidine ammonia-lyase (515 aa).

The segment at residues 142 to 144 is a cross-link (5-imidazolinone (Ala-Gly)); the sequence is ASG. Residue Ser-143 is modified to 2,3-didehydroalanine (Ser).

This sequence belongs to the PAL/histidase family. Post-translationally, contains an active site 4-methylidene-imidazol-5-one (MIO), which is formed autocatalytically by cyclization and dehydration of residues Ala-Ser-Gly.

Its subcellular location is the cytoplasm. It catalyses the reaction L-histidine = trans-urocanate + NH4(+). It participates in amino-acid degradation; L-histidine degradation into L-glutamate; N-formimidoyl-L-glutamate from L-histidine: step 1/3. In Methylobacterium nodulans (strain LMG 21967 / CNCM I-2342 / ORS 2060), this protein is Histidine ammonia-lyase.